A 332-amino-acid polypeptide reads, in one-letter code: 2,3-diketo-L-gulonate reductase (332 aa).

Histidine 44 acts as the Proton donor in catalysis. NAD(+) is bound by residues 168–174, 224–225, and 304–306; these read ITMVDMS, WK, and GHE.

This sequence belongs to the LDH2/MDH2 oxidoreductase family. DlgD subfamily. As to quaternary structure, homodimer.

It localises to the cytoplasm. The catalysed reaction is 3-dehydro-L-gulonate + NAD(+) = 2,3-dioxo-L-gulonate + NADH + H(+). The enzyme catalyses 3-dehydro-L-gulonate + NADP(+) = 2,3-dioxo-L-gulonate + NADPH + H(+). Its function is as follows. Catalyzes the reduction of 2,3-diketo-L-gulonate in the presence of NADH, to form 3-keto-L-gulonate. The sequence is that of 2,3-diketo-L-gulonate reductase from Escherichia coli (strain SMS-3-5 / SECEC).